Reading from the N-terminus, the 129-residue chain is Phosphoribosyl-AMP cyclohydrolase (129 aa).

D76 is a Mg(2+) binding site. C77 contacts Zn(2+). Positions 78 and 80 each coordinate Mg(2+). Residues C97 and C104 each coordinate Zn(2+).

The protein belongs to the PRA-CH family. As to quaternary structure, homodimer. It depends on Mg(2+) as a cofactor. Zn(2+) is required as a cofactor.

The protein resides in the cytoplasm. The enzyme catalyses 1-(5-phospho-beta-D-ribosyl)-5'-AMP + H2O = 1-(5-phospho-beta-D-ribosyl)-5-[(5-phospho-beta-D-ribosylamino)methylideneamino]imidazole-4-carboxamide. It functions in the pathway amino-acid biosynthesis; L-histidine biosynthesis; L-histidine from 5-phospho-alpha-D-ribose 1-diphosphate: step 3/9. Its function is as follows. Catalyzes the hydrolysis of the adenine ring of phosphoribosyl-AMP. This Leptothrix cholodnii (strain ATCC 51168 / LMG 8142 / SP-6) (Leptothrix discophora (strain SP-6)) protein is Phosphoribosyl-AMP cyclohydrolase.